Here is a 585-residue protein sequence, read N- to C-terminus: Bestrophin-1 (585 aa).

Topologically, residues M1–L31 are cytoplasmic. Residue A10 coordinates Ca(2+). Residues L32–R51 traverse the membrane as a helical segment. The Extracellular portion of the chain corresponds to L52–L60. The helical transmembrane segment at M61–L82 threads the bilayer. Residues G83–T237 lie on the Cytoplasmic side of the membrane. Residues Q238–R255 traverse the membrane as a helical segment. The Extracellular segment spans residues Q256–P274. Residues V275–L288 traverse the membrane as a helical segment. The Cytoplasmic portion of the chain corresponds to K289–S585. The Ca(2+) site is built by Q293, N296, D301, and D304. Residues P346–Q379 are auto-inhibitory segment.

It belongs to the anion channel-forming bestrophin (TC 1.A.46) family. Calcium-sensitive chloride channel subfamily. Interacts with YWHAG; this interaction promotes the ligand-gated L-glutamate channel activity leading to the positive regulation of NMDA glutamate receptor activity through the L-glutamate secretion. Predominantly expressed in the basolateral membrane of the retinal pigment epithelium.

It localises to the cell membrane. It is found in the basolateral cell membrane. It carries out the reaction chloride(in) = chloride(out). The catalysed reaction is hydrogencarbonate(in) = hydrogencarbonate(out). The enzyme catalyses 4-aminobutanoate(in) = 4-aminobutanoate(out). It catalyses the reaction L-glutamate(out) = L-glutamate(in). Its activity is regulated as follows. Inactivated by sulfhydryl-reactive agents. Its function is as follows. Ligand-gated anion channel that allows the movement of anions across cell membranes when activated by calcium (Ca2+). Allows the movement of chloride and hydrogencarbonate. Found in a partially open conformation leading to significantly smaller chloride movement. Upon F2R/PAR-1 activation, the sequestered calcium is released into the cytosol of astrocytes, leading to the (Ca2+)-dependent release of L-glutamate into the synaptic cleft that targets the neuronal postsynaptic GRIN2A/NMDAR receptor resulting in the synaptic plasticity regulation. Upon activation of the norepinephrine-alpha-1 adrenergic receptor signaling pathway, transports as well D-serine than L-glutamate in a (Ca2+)-dependent manner, leading to activation of adjacent NMDAR receptors and therefore regulates the heterosynaptic long-term depression and metaplasticity during initial memory acquisition. Releases the 4-aminobutanoate neurotransmitter in a (Ca2+)-dependent manner, and participates in its tonic release from cerebellar glial cells. The chain is Bestrophin-1 from Homo sapiens (Human).